A 552-amino-acid polypeptide reads, in one-letter code: MNVEDLKKSVTNIVHSMYNFDCSEIVSLTRPPKPEYGDWALSLPLKLASLLKSPAIDIAQSIASALLELDGVQDVYVAKPGFINLKLSREHTTGIISEVLEQGSSFGRNTTQSSKKINLEFVSGNPTGPLHLAHTRWAAVGDSIARILINCGADVTREYYINNVGNQIHLFSESVYARALSKSLPKDGYPGEYVKDIARRIQCEFPNIIDLSYEDAIKIFRKRSWQIQIEEIKKSCIAFRVNFDVWFSEESLHEPDRFGKSQIDKALARCKQNGYLFQKNGAFFIRTTEFGDDKDRAVLRSDTSYTYYAADCAYYLNKINRGFSDLVILVGADHHGYVKRFQAMSNIFHVDSENNRKNVQVLLGQMVLLKNKRQSKREGNVIGLSEIIQSVGVDPLRFWFCRYPIDTPIDLDEQHLKKRSNDNPVYYVQYAYARTRSLIRSANLLQMEKFGFFPELLVHETETALVSLLYDYKTVVIDAARFLQPHRVVRYLESLAGAYHKWYDKCRIIPRKGILDKSEAELVNTRLELNRAVGQVLYNALDLIGVSAPERM.

The 'HIGH' region motif lies at G124 to H134.

Belongs to the class-I aminoacyl-tRNA synthetase family. In terms of assembly, monomer.

It localises to the cytoplasm. It carries out the reaction tRNA(Arg) + L-arginine + ATP = L-arginyl-tRNA(Arg) + AMP + diphosphate. This Tropheryma whipplei (strain Twist) (Whipple's bacillus) protein is Arginine--tRNA ligase.